The chain runs to 556 residues: Formate--tetrahydrofolate ligase (556 aa).

65–72 is an ATP binding site; that stretch reads TPAGEGKT.

This sequence belongs to the formate--tetrahydrofolate ligase family.

It carries out the reaction (6S)-5,6,7,8-tetrahydrofolate + formate + ATP = (6R)-10-formyltetrahydrofolate + ADP + phosphate. It functions in the pathway one-carbon metabolism; tetrahydrofolate interconversion. The chain is Formate--tetrahydrofolate ligase from Hyphomonas neptunium (strain ATCC 15444).